Reading from the N-terminus, the 301-residue chain is Probable alpha-L-glutamate ligase (301 aa).

Positions 104–287 (LQLLSRRGIG…VAGMIIEHLE (184 aa)) constitute an ATP-grasp domain. Residues Lys141, 178-179 (EY), Asp187, and 211-213 (RSN) each bind ATP. Mg(2+) contacts are provided by Asp248, Glu260, and Asn262. Asp248, Glu260, and Asn262 together coordinate Mn(2+).

The protein belongs to the RimK family. Requires Mg(2+) as cofactor. Mn(2+) is required as a cofactor.

The polypeptide is Probable alpha-L-glutamate ligase (Pseudomonas putida (strain GB-1)).